Here is a 377-residue protein sequence, read N- to C-terminus: Compound eye opsin BCRH1 (377 aa).

At 1–53 (MANVTGPQMAFYGSGAATFGYPEGMTVADFVPDRVKHMVLDHWYNYPPVNPMW) the chain is on the extracellular side. A glycan (N-linked (GlcNAc...) asparagine) is linked at N3. A helical membrane pass occupies residues 54–78 (HYLLGVVYLFLGVISIAGNGLVIYL). Residues 79–90 (YMKSQALKTPAN) lie on the Cytoplasmic side of the membrane. A helical membrane pass occupies residues 91–115 (MLIVNLALSDLIMLTTNFPPFCYNC). Residues 116 to 131 (FSGGRWMFSGTYCEIY) lie on the Extracellular side of the membrane. A disulfide bridge links C128 with C205. Residues 132-151 (AALGAITGVCSIWTLCMISF) form a helical membrane-spanning segment. Residues 152–170 (DRYNIICNGFNGPKLTQGK) lie on the Cytoplasmic side of the membrane. Residues 171 to 194 (ATFMCGLAWVISVGWSLPPFFGWG) form a helical membrane-spanning segment. Over 195 to 218 (SYTLEGILDSCSYDYFTRDMNTIT) the chain is Extracellular. The chain crosses the membrane as a helical span at residues 219-246 (YNICIFIFDFFLPASVIVFSYVFIVKAI). The Cytoplasmic portion of the chain corresponds to 247 to 281 (FAHEAAMRAQAKKMNVTNLRSNEAETQRAEIRIAK). The helical transmembrane segment at 282 to 305 (TALVNVSLWFICWTPYAAITIQGL) threads the bilayer. Over 306–313 (LGNAEGIT) the chain is Extracellular. A helical membrane pass occupies residues 314 to 338 (PLLTTLPALLAKSCSCYNPFVYAIS). K325 bears the N6-(retinylidene)lysine mark. Topologically, residues 339–377 (HPKFRLAITQHLPWFCVHEKDPNDVEENQSSNTQTQEKS) are cytoplasmic.

Belongs to the G-protein coupled receptor 1 family. Opsin subfamily. Post-translationally, phosphorylated on some or all of the serine and threonine residues present in the C-terminal region. In terms of tissue distribution, expressed in all of the seven retinular cells (R1-R7) forming the main rhabdom in each ommatidium.

It is found in the membrane. In terms of biological role, visual pigments are the light-absorbing molecules that mediate vision. They consist of an apoprotein, opsin, covalently linked to cis-retinal. This opsin produces visual pigments with maximal absorption in the blue-green region of the spectrum. This chain is Compound eye opsin BCRH1, found in Hemigrapsus sanguineus (Asian shore crab).